The primary structure comprises 345 residues: Beta-2-glycoprotein 1 (345 aa).

A signal peptide spans 1 to 19 (MISLGLILFSSVLCHVATA). Sushi domains lie at 21–81 (RTCP…RCIP), 82–139 (RVCP…VCTR), 140–202 (VTCP…ECRE), and 203–262 (VKCP…SCKA). Disulfide bonds link Cys23-Cys66, Cys51-Cys79, Cys84-Cys124, Cys110-Cys137, Cys142-Cys188, Cys174-Cys200, Cys205-Cys248, Cys234-Cys260, Cys264-Cys315, Cys300-Cys325, and Cys307-Cys345. The O-linked (GalNAc...) threonine glycan is linked to Thr33. Residues Asn117, Asn162, Asn183, and Asn193 are each glycosylated (N-linked (GlcNAc...) asparagine). Asn253 is a glycosylation site (N-linked (GlcNAc...) asparagine). Residues 263 to 345 (SCKLSVKKAT…KTDASDVKPC (83 aa)) form a sushi-like region.

Expressed by the liver and secreted in plasma.

Its subcellular location is the secreted. Functionally, binds to various kinds of negatively charged substances such as heparin, phospholipids, and dextran sulfate. May prevent activation of the intrinsic blood coagulation cascade by binding to phospholipids on the surface of damaged cells. In Canis lupus familiaris (Dog), this protein is Beta-2-glycoprotein 1 (APOH).